Here is a 557-residue protein sequence, read N- to C-terminus: Probable protein kinase UbiB (557 aa).

Residues 121-509 enclose the Protein kinase domain; sequence SFDTVPLASA…RKLQTRVVTA (389 aa). ATP contacts are provided by residues 127 to 135 and Lys-154; that span reads LASASIAQV. The active-site Proton acceptor is Asp-289. 2 helical membrane-spanning segments follow: residues 506–526 and 535–555; these read VVTA…YGLH and VPVW…VAWL.

It belongs to the ABC1 family. UbiB subfamily.

It is found in the cell inner membrane. It participates in cofactor biosynthesis; ubiquinone biosynthesis [regulation]. In terms of biological role, is probably a protein kinase regulator of UbiI activity which is involved in aerobic coenzyme Q (ubiquinone) biosynthesis. This chain is Probable protein kinase UbiB, found in Xanthomonas axonopodis pv. citri (strain 306).